A 273-amino-acid polypeptide reads, in one-letter code: 4-hydroxy-tetrahydrodipicolinate reductase (273 aa).

NAD(+) contacts are provided by residues 12 to 17 (GAGGRM) and Glu-38. Arg-39 provides a ligand contact to NADP(+). Residues 102–104 (GTT) and 126–129 (AANF) contribute to the NAD(+) site. His-159 acts as the Proton donor/acceptor in catalysis. His-160 contacts (S)-2,3,4,5-tetrahydrodipicolinate. The active-site Proton donor is Lys-163. A (S)-2,3,4,5-tetrahydrodipicolinate-binding site is contributed by 169-170 (GT).

Belongs to the DapB family. In terms of assembly, homotetramer.

It localises to the cytoplasm. It catalyses the reaction (S)-2,3,4,5-tetrahydrodipicolinate + NAD(+) + H2O = (2S,4S)-4-hydroxy-2,3,4,5-tetrahydrodipicolinate + NADH + H(+). The catalysed reaction is (S)-2,3,4,5-tetrahydrodipicolinate + NADP(+) + H2O = (2S,4S)-4-hydroxy-2,3,4,5-tetrahydrodipicolinate + NADPH + H(+). It participates in amino-acid biosynthesis; L-lysine biosynthesis via DAP pathway; (S)-tetrahydrodipicolinate from L-aspartate: step 4/4. In terms of biological role, catalyzes the conversion of 4-hydroxy-tetrahydrodipicolinate (HTPA) to tetrahydrodipicolinate. This Escherichia coli O127:H6 (strain E2348/69 / EPEC) protein is 4-hydroxy-tetrahydrodipicolinate reductase.